Reading from the N-terminus, the 275-residue chain is Undecaprenyl-diphosphatase (275 aa).

Helical transmembrane passes span 4 to 24 (LNVIKAIILGIVEGFTEWLPI), 44 to 64 (AFMDMFNYVIQFGAILAVVVL), 85 to 105 (WTLWFKVILAVIPSVIIGFPL), 113 to 133 (LMQNWVVASMLILYGILFIVI), 149 to 169 (TLPWLTAFWIGCFQALSIIPG), 188 to 208 (FVGAEFSFFMAIPTMIGVSIL), 226 to 246 (IILLVGMVVSFIISIISIKFL), and 255 to 275 (FKVFGWYRIILGVLVLGAMFL).

Belongs to the UppP family.

Its subcellular location is the cell membrane. It carries out the reaction di-trans,octa-cis-undecaprenyl diphosphate + H2O = di-trans,octa-cis-undecaprenyl phosphate + phosphate + H(+). In terms of biological role, catalyzes the dephosphorylation of undecaprenyl diphosphate (UPP). Confers resistance to bacitracin. The chain is Undecaprenyl-diphosphatase from Latilactobacillus sakei subsp. sakei (strain 23K) (Lactobacillus sakei subsp. sakei).